Reading from the N-terminus, the 57-residue chain is Small nuclear protein PRAC1 (57 aa).

Residues 38-57 form a disordered region; the sequence is RSDGSACNSGISGGRGRKIP.

In terms of tissue distribution, highly expressed in prostate, rectum, and distal colon, and weakly expressed in bladder. Expressed in prostate cancer cell lines.

The protein localises to the nucleus. The protein is Small nuclear protein PRAC1 (PRAC1) of Homo sapiens (Human).